A 66-amino-acid chain; its full sequence is Large ribosomal subunit protein bL33c (66 aa).

This sequence belongs to the bacterial ribosomal protein bL33 family.

The protein localises to the plastid. Its subcellular location is the chloroplast. The sequence is that of Large ribosomal subunit protein bL33c from Vitis vinifera (Grape).